A 166-amino-acid polypeptide reads, in one-letter code: Small heat shock protein OV25-2 (166 aa).

The sHSP domain occupies 38-149; the sequence is LNECNIGNSL…ASRNIPIRAS (112 aa). The interval 140 to 166 is disordered; it reads ASRNIPIRASPKEPEANQKSAINDAKQ.

The protein belongs to the small heat shock protein (HSP20) family.

The protein is Small heat shock protein OV25-2 (OV25-2) of Onchocerca volvulus.